A 166-amino-acid chain; its full sequence is 2S seed storage protein 4 (166 aa).

The signal sequence occupies residues methionine 1–alanine 21. Propeptides lie at residues serine 22–asparagine 37 and glycine 73–asparagine 88.

This sequence belongs to the 2S seed storage albumins family. In terms of assembly, the mature protein consists of a small and a large chain linked by disulfide bonds.

This is a 2S seed storage protein. The polypeptide is 2S seed storage protein 4 (AT2S4) (Arabidopsis thaliana (Mouse-ear cress)).